The sequence spans 163 residues: Phosphopantetheine adenylyltransferase (163 aa).

ATP contacts are provided by serine 10 and histidine 18. Residue serine 10 coordinates substrate. Positions 42, 75, and 89 each coordinate substrate. ATP contacts are provided by residues 90–92, glutamate 100, and 125–131; these read GIR and YAHVSSS.

The protein belongs to the bacterial CoaD family. As to quaternary structure, homohexamer. The cofactor is Mg(2+).

The protein resides in the cytoplasm. The catalysed reaction is (R)-4'-phosphopantetheine + ATP + H(+) = 3'-dephospho-CoA + diphosphate. It participates in cofactor biosynthesis; coenzyme A biosynthesis; CoA from (R)-pantothenate: step 4/5. Its function is as follows. Reversibly transfers an adenylyl group from ATP to 4'-phosphopantetheine, yielding dephospho-CoA (dPCoA) and pyrophosphate. This chain is Phosphopantetheine adenylyltransferase, found in Enterococcus faecalis (strain ATCC 700802 / V583).